Here is a 974-residue protein sequence, read N- to C-terminus: Collagen alpha-1(I) chain (974 aa).

A compositionally biased stretch (low complexity) spans 1–14 (GISVPGPMGPSGPR). The disordered stretch occupies residues 1 to 974 (GISVPGPMGP…PGPPGPPGPP (974 aa)). 10 positions are modified to 4-hydroxyproline: Pro-17, Pro-20, Pro-23, Pro-32, Pro-35, Pro-38, Pro-53, Pro-68, Pro-75, and Pro-81. Over residues 25-44 (PQGFQGPPGEPGEPGASGPM) the composition is skewed to low complexity. The segment covering 56-73 (NGDDGEAGKPGRPGERRG) has biased composition (basic and acidic residues). The residue at position 84 (Lys-84) is a 5-hydroxylysine; alternate. Residue Lys-84 is glycosylated (O-linked (Gal...) hydroxylysine; alternate). At Ser-90 the chain carries Phosphoserine. Positions 98-114 (DAGPAGPKGEPGSPGEN) are enriched in low complexity. Pro-108, Pro-111, Pro-117, Pro-126, Pro-132, Pro-153, Pro-162, Pro-165, Pro-192, Pro-195, Pro-207, Pro-213, Pro-222, Pro-228, Pro-231, and Pro-245 each carry 4-hydroxyproline. The span at 132–150 (PGASGPAGARGNDGATGAA) shows a compositional bias: low complexity. Residues 152–164 (PPGPTGPAGPPGF) are compositionally biased toward pro residues. The span at 198 to 228 (AGAAGPAGNPGADGQPGAKGANGAPGIAGAP) shows a compositional bias: low complexity. Lys-248 carries the 5-hydroxylysine modification. 4-hydroxyproline is present on residues Pro-254, Pro-257, Pro-269, Pro-278, Pro-293, Pro-299, Pro-308, and Pro-314. Over residues 303 to 312 (GERGGPGSRG) the composition is skewed to gly residues. Lys-323 carries the post-translational modification 5-hydroxylysine. A 4-hydroxyproline mark is found at Pro-328, Pro-337, Pro-343, Pro-349, Pro-358, Pro-361, Pro-370, Pro-379, Pro-385, Pro-397, Pro-406, Pro-415, Pro-418, Pro-436, Pro-454, Pro-460, Pro-466, Pro-472, Pro-484, Pro-493, Pro-505, Pro-520, Pro-527, and Pro-536. Positions 352–378 (KGLTGSPGSPGPDGKTGPPGPAGQDGR) are enriched in low complexity. The segment covering 387 to 406 (ARGQAGVMGFPGPKGAAGEP) has biased composition (low complexity). Low complexity predominate over residues 504-517 (APGNDGAKGDAGAP). Lys-548 bears the 5-hydroxylysine mark. Pro-554, Pro-569, and Pro-575 each carry 4-hydroxyproline. Residues 581–595 (SGPSGPAGPTGARGA) are compositionally biased toward low complexity. A Phosphoserine modification is found at Ser-584. A 4-hydroxyproline mark is found at Pro-596, Pro-602, Pro-605, Pro-614, Pro-620, Pro-638, Pro-647, and Pro-656. The span at 608–635 (AGFAGPPGADGQPGAKGEPGDAGAKGDA) shows a compositional bias: low complexity. The span at 637-649 (PPGPAGPTGPPGP) shows a compositional bias: pro residues. Lys-659 is modified (5-hydroxylysine). Positions 664–680 (SAGPPGATGFPGAAGRV) are enriched in low complexity. 2 positions are modified to 4-hydroxyproline: Pro-668 and Pro-674. Position 682 is a 3-hydroxyproline (Pro-682). 4-hydroxyproline occurs at positions 683, 692, 695, 716, 725, 733, 742, 760, 769, 772, 778, 793, 799, 805, 814, and 820. Low complexity predominate over residues 709 to 718 (ETGPAGRPGE). Over residues 730–742 (KGSPGADGPAGAP) the composition is skewed to low complexity. Residues 792 to 802 (PPGPVGPPGLA) show a composition bias toward pro residues. The segment covering 804-826 (PPGESGREGSPGAEGSPGRDGSP) has biased composition (low complexity). The segment covering 828-844 (PKGPPGAPGAPGAPGPV) has biased composition (pro residues). 5-hydroxylysine is present on Lys-829. 4-hydroxyproline occurs at positions 832, 835, and 838. The span at 865–879 (AGPAGARGPAGPQGP) shows a compositional bias: low complexity. Positions 880 to 894 (RGDKGETGEQGDRRG) are enriched in basic and acidic residues. At Lys-883 the chain carries 5-hydroxylysine. A 4-hydroxyproline mark is found at Pro-905, Pro-908, Pro-926, and Pro-941. A compositionally biased stretch (low complexity) spans 908-941 (PGEQGPSGASGPAGPRGPPGSAGSPGKDGLNGLP). Position 946 is a 3-hydroxyproline (Pro-946). Residue Pro-947 is modified to 4-hydroxyproline. The segment covering 959 to 974 (VGPPGPPGPPGPPGPP) has biased composition (pro residues). Residue Pro-961 is modified to 3-hydroxyproline. A 4-hydroxyproline modification is found at Pro-962. Pro-964 is subject to 3-hydroxyproline. Pro-965 carries the 4-hydroxyproline modification. A 3-hydroxyproline modification is found at Pro-967. Residues Pro-968, Pro-971, and Pro-974 each carry the 4-hydroxyproline modification.

This sequence belongs to the fibrillar collagen family. As to quaternary structure, trimers of one alpha 2(I) and two alpha 1(I) chains. Post-translationally, contains mostly 4-hydroxyproline. Proline residues at the third position of the tripeptide repeating unit (G-X-Y) are hydroxylated in some or all of the chains. Contains 3-hydroxyproline at a few sites. This modification occurs on the first proline residue in the sequence motif Gly-Pro-Hyp, where Hyp is 4-hydroxyproline. In terms of processing, lysine residues at the third position of the tripeptide repeating unit (G-X-Y) are 5-hydroxylated in some or all of the chains. Post-translationally, O-glycosylated on hydroxylated lysine residues. The O-linked glycan consists of a Glc-Gal disaccharide. Expressed in bones.

Its subcellular location is the secreted. It localises to the extracellular space. The protein resides in the extracellular matrix. Functionally, type I collagen is a member of group I collagen (fibrillar forming collagen). The protein is Collagen alpha-1(I) chain of Scelidodon sp. (strain SLP-2019) (South American ground sloth).